We begin with the raw amino-acid sequence, 175 residues long: ATP synthase subunit b (175 aa).

Residues 13 to 33 (LLSPNPGLIFWTAVTFLLLLL) form a helical membrane-spanning segment.

It belongs to the ATPase B chain family. F-type ATPases have 2 components, F(1) - the catalytic core - and F(0) - the membrane proton channel. F(1) has five subunits: alpha(3), beta(3), gamma(1), delta(1), epsilon(1). F(0) has four main subunits: a(1), b(2) and c(10-14). The alpha and beta chains form an alternating ring which encloses part of the gamma chain. F(1) is attached to F(0) by a central stalk formed by the gamma and epsilon chains, while a peripheral stalk is formed by the delta and b chains.

It localises to the cell inner membrane. F(1)F(0) ATP synthase produces ATP from ADP in the presence of a proton or sodium gradient. F-type ATPases consist of two structural domains, F(1) containing the extramembraneous catalytic core and F(0) containing the membrane proton channel, linked together by a central stalk and a peripheral stalk. During catalysis, ATP synthesis in the catalytic domain of F(1) is coupled via a rotary mechanism of the central stalk subunits to proton translocation. Functionally, component of the F(0) channel, it forms part of the peripheral stalk, linking F(1) to F(0). The protein is ATP synthase subunit b of Chloroherpeton thalassium (strain ATCC 35110 / GB-78).